Reading from the N-terminus, the 99-residue chain is Putative type 4B encapsulin shell protein PF1875 (99 aa).

Belongs to the encapsulin family. Family 4B subfamily. As to quaternary structure, may self-assemble into facets and potentially into larger complexes.

The protein localises to the encapsulin nanocompartment. In terms of biological role, may be the encapsulin shell protein in a type 4 A-domain encapsulin nanocompartment system. Its cargo may be upstream glyceraldehyde-3-phosphate dehydrogenase (AC P61879). The chain is Putative type 4B encapsulin shell protein PF1875 from Pyrococcus furiosus (strain ATCC 43587 / DSM 3638 / JCM 8422 / Vc1).